The chain runs to 109 residues: Ribonuclease (109 aa).

Residue E72 is the Proton acceptor of the active site. The active-site Proton donor is the H101.

The protein belongs to the ribonuclease N1/T1 family.

The protein resides in the secreted. Functionally, hydrolyzes phosphodiester bonds in RNA, poly- and oligoribonucleotides resulting in 3'-nucleoside monophosphates via 2',3'-cyclophosphate intermediates. The protein is Ribonuclease of Heyndrickxia coagulans (Weizmannia coagulans).